The primary structure comprises 534 residues: uncharacterized protein (534 aa).

The signal sequence occupies residues 1–22 (MGLRLLFSLICVFCISNIFTQA). Residue N31 is glycosylated (N-linked (GlcNAc...) asparagine). Disordered regions lie at residues 70–145 (PTYY…SSVS) and 176–418 (SSLS…SSAP). Residue N426 is glycosylated (N-linked (GlcNAc...) asparagine).

The protein resides in the endoplasmic reticulum. It localises to the cell membrane. This is an uncharacterized protein from Schizosaccharomyces pombe (strain 972 / ATCC 24843) (Fission yeast).